A 72-amino-acid chain; its full sequence is Heat-stable enterotoxin A2 (72 aa).

The signal sequence occupies residues 1-19; it reads MKKSILFIFLSVLSFSPFA. Residues 20–53 constitute a propeptide that is removed on maturation; the sequence is QDAKPAGSSKEKITLESKKCNIVKKNNESSPESM. Cystine bridges form between cysteine 59/cysteine 64, cysteine 60/cysteine 68, and cysteine 63/cysteine 71.

The protein belongs to the heat-stable enterotoxin family.

The protein resides in the secreted. Toxin which activates the particulate form of guanylate cyclase and increases cyclic GMP levels within the host intestinal epithelial cells. In Escherichia coli, this protein is Heat-stable enterotoxin A2 (sta2).